A 1297-amino-acid polypeptide reads, in one-letter code: Regulator of V-ATPase in vacuolar membrane protein 1 (1297 aa).

2 stretches are compositionally biased toward basic and acidic residues: residues 1161-1171 (DQEIHENKDSQ) and 1260-1269 (AVEKTHDSPK). 2 disordered regions span residues 1161-1182 (DQEI…VRNK) and 1260-1297 (AVEK…FSFE).

In terms of assembly, component of the RAVE complex composed of rav1, rav2 and skp1. Interacts with vam2.

The protein resides in the cytoplasm. Its subcellular location is the nucleus. The protein localises to the endomembrane system. Functionally, component of the RAVE complex which is required for stable assembly of the vacuolar ATPase complex V-ATPase. The protein is Regulator of V-ATPase in vacuolar membrane protein 1 (rav1) of Schizosaccharomyces pombe (strain 972 / ATCC 24843) (Fission yeast).